Reading from the N-terminus, the 312-residue chain is Ornithine carbamoyltransferase (312 aa).

Residues 57-60 (STRT), Q84, R108, and 135-138 (HPCQ) contribute to the carbamoyl phosphate site. Residues N166, D226, and 230 to 231 (SM) each bind L-ornithine. Residues 265 to 266 (CL) and R293 each bind carbamoyl phosphate.

The protein belongs to the aspartate/ornithine carbamoyltransferase superfamily. OTCase family.

It is found in the cytoplasm. It carries out the reaction carbamoyl phosphate + L-ornithine = L-citrulline + phosphate + H(+). Its pathway is amino-acid degradation; L-arginine degradation via ADI pathway; carbamoyl phosphate from L-arginine: step 2/2. In terms of biological role, reversibly catalyzes the transfer of the carbamoyl group from carbamoyl phosphate (CP) to the N(epsilon) atom of ornithine (ORN) to produce L-citrulline. The sequence is that of Ornithine carbamoyltransferase from Brucella abortus (strain 2308).